The chain runs to 379 residues: Succinyl-diaminopimelate desuccinylase (379 aa).

H70 serves as a coordination point for Zn(2+). Residue D72 is part of the active site. D103 contacts Zn(2+). E137 acts as the Proton acceptor in catalysis. The Zn(2+) site is built by E138, E166, and H352.

Belongs to the peptidase M20A family. DapE subfamily. Homodimer. The cofactor is Zn(2+). It depends on Co(2+) as a cofactor.

It catalyses the reaction N-succinyl-(2S,6S)-2,6-diaminopimelate + H2O = (2S,6S)-2,6-diaminopimelate + succinate. It functions in the pathway amino-acid biosynthesis; L-lysine biosynthesis via DAP pathway; LL-2,6-diaminopimelate from (S)-tetrahydrodipicolinate (succinylase route): step 3/3. Its function is as follows. Catalyzes the hydrolysis of N-succinyl-L,L-diaminopimelic acid (SDAP), forming succinate and LL-2,6-diaminopimelate (DAP), an intermediate involved in the bacterial biosynthesis of lysine and meso-diaminopimelic acid, an essential component of bacterial cell walls. The polypeptide is Succinyl-diaminopimelate desuccinylase (Burkholderia mallei (strain NCTC 10247)).